The chain runs to 429 residues: Adenosylmethionine-8-amino-7-oxononanoate aminotransferase (429 aa).

Tryptophan 52 contacts substrate. Residue 112-113 (GS) participates in pyridoxal 5'-phosphate binding. Tyrosine 144 is a substrate binding site. Aspartate 245 serves as a coordination point for pyridoxal 5'-phosphate. Lysine 274 and glycine 307 together coordinate substrate. Lysine 274 is modified (N6-(pyridoxal phosphate)lysine). Position 308 to 309 (308 to 309 (PT)) interacts with pyridoxal 5'-phosphate. Arginine 391 serves as a coordination point for substrate.

It belongs to the class-III pyridoxal-phosphate-dependent aminotransferase family. BioA subfamily. Homodimer. Requires pyridoxal 5'-phosphate as cofactor.

It localises to the cytoplasm. The catalysed reaction is (8S)-8-amino-7-oxononanoate + S-adenosyl-L-methionine = S-adenosyl-4-methylsulfanyl-2-oxobutanoate + (7R,8S)-7,8-diammoniononanoate. It functions in the pathway cofactor biosynthesis; biotin biosynthesis; 7,8-diaminononanoate from 8-amino-7-oxononanoate (SAM route): step 1/1. Functionally, catalyzes the transfer of the alpha-amino group from S-adenosyl-L-methionine (SAM) to 7-keto-8-aminopelargonic acid (KAPA) to form 7,8-diaminopelargonic acid (DAPA). It is the only aminotransferase known to utilize SAM as an amino donor. The chain is Adenosylmethionine-8-amino-7-oxononanoate aminotransferase from Buchnera aphidicola subsp. Baizongia pistaciae (strain Bp).